The primary structure comprises 335 residues: Holliday junction branch migration complex subunit RuvB (335 aa).

A large ATPase domain (RuvB-L) region spans residues 4–184; sequence ADRIISSNAQ…FGIVQRLEFY (181 aa). ATP contacts are provided by residues Ile23, Arg24, Gly65, Lys68, Thr69, Thr70, 131–133, Arg174, Tyr184, and Arg221; that span reads EDY. Mg(2+) is bound at residue Thr69. The segment at 185–255 is small ATPAse domain (RuvB-S); that stretch reads SVEDLTSIVA…IAKSALSMLD (71 aa). The head domain (RuvB-H) stretch occupies residues 258-335; the sequence is QAGFDYLDRK…RHFGLDKLTE (78 aa). The DNA site is built by Arg294, Arg313, and Arg318.

Belongs to the RuvB family. In terms of assembly, homohexamer. Forms an RuvA(8)-RuvB(12)-Holliday junction (HJ) complex. HJ DNA is sandwiched between 2 RuvA tetramers; dsDNA enters through RuvA and exits via RuvB. An RuvB hexamer assembles on each DNA strand where it exits the tetramer. Each RuvB hexamer is contacted by two RuvA subunits (via domain III) on 2 adjacent RuvB subunits; this complex drives branch migration. In the full resolvosome a probable DNA-RuvA(4)-RuvB(12)-RuvC(2) complex forms which resolves the HJ.

It localises to the cytoplasm. The enzyme catalyses ATP + H2O = ADP + phosphate + H(+). Its function is as follows. The RuvA-RuvB-RuvC complex processes Holliday junction (HJ) DNA during genetic recombination and DNA repair, while the RuvA-RuvB complex plays an important role in the rescue of blocked DNA replication forks via replication fork reversal (RFR). RuvA specifically binds to HJ cruciform DNA, conferring on it an open structure. The RuvB hexamer acts as an ATP-dependent pump, pulling dsDNA into and through the RuvAB complex. RuvB forms 2 homohexamers on either side of HJ DNA bound by 1 or 2 RuvA tetramers; 4 subunits per hexamer contact DNA at a time. Coordinated motions by a converter formed by DNA-disengaged RuvB subunits stimulates ATP hydrolysis and nucleotide exchange. Immobilization of the converter enables RuvB to convert the ATP-contained energy into a lever motion, pulling 2 nucleotides of DNA out of the RuvA tetramer per ATP hydrolyzed, thus driving DNA branch migration. The RuvB motors rotate together with the DNA substrate, which together with the progressing nucleotide cycle form the mechanistic basis for DNA recombination by continuous HJ branch migration. Branch migration allows RuvC to scan DNA until it finds its consensus sequence, where it cleaves and resolves cruciform DNA. This is Holliday junction branch migration complex subunit RuvB from Mannheimia succiniciproducens (strain KCTC 0769BP / MBEL55E).